We begin with the raw amino-acid sequence, 160 residues long: Cytochrome b6-f complex subunit 4 (160 aa).

3 helical membrane-spanning segments follow: residues 36–56, 95–115, and 128–148; these read LLYIFPVVILGTIACVVGLAV, LLGIALQTLIPLGLMILPFIE, and IAMSLFLFGTFLTIYLGIGAC.

Belongs to the cytochrome b family. PetD subfamily. The 4 large subunits of the cytochrome b6-f complex are cytochrome b6, subunit IV (17 kDa polypeptide, PetD), cytochrome f and the Rieske protein, while the 4 small subunits are PetG, PetL, PetM and PetN. The complex functions as a dimer.

The protein resides in the cellular thylakoid membrane. Its function is as follows. Component of the cytochrome b6-f complex, which mediates electron transfer between photosystem II (PSII) and photosystem I (PSI), cyclic electron flow around PSI, and state transitions. This is Cytochrome b6-f complex subunit 4 from Prochlorococcus marinus (strain MIT 9312).